Consider the following 358-residue polypeptide: 3-dehydroquinate synthase (358 aa).

NAD(+)-binding positions include 102–106 (GVVGD), 126–127 (TT), Lys-138, and Lys-147. Zn(2+) contacts are provided by Glu-180, His-243, and His-260.

It belongs to the sugar phosphate cyclases superfamily. Dehydroquinate synthase family. Requires Co(2+) as cofactor. Zn(2+) is required as a cofactor. The cofactor is NAD(+).

The protein resides in the cytoplasm. It catalyses the reaction 7-phospho-2-dehydro-3-deoxy-D-arabino-heptonate = 3-dehydroquinate + phosphate. Its pathway is metabolic intermediate biosynthesis; chorismate biosynthesis; chorismate from D-erythrose 4-phosphate and phosphoenolpyruvate: step 2/7. In terms of biological role, catalyzes the conversion of 3-deoxy-D-arabino-heptulosonate 7-phosphate (DAHP) to dehydroquinate (DHQ). This Shouchella clausii (strain KSM-K16) (Alkalihalobacillus clausii) protein is 3-dehydroquinate synthase.